We begin with the raw amino-acid sequence, 228 residues long: Prolactin-2A1 (228 aa).

Residues 1–29 form the signal peptide; that stretch reads MQLSITHPCCWTLRLLLVSNLLLWENVAL. 2 disulfide bridges follow: cysteine 87-cysteine 203 and cysteine 220-cysteine 228.

Belongs to the somatotropin/prolactin family. In terms of tissue distribution, expressed specifically in the placenta. Highly expressed in invasive trophoblast cells lining the central placental vessel.

It is found in the secreted. This is Prolactin-2A1 (Prl2a1) from Rattus norvegicus (Rat).